Reading from the N-terminus, the 277-residue chain is Thymidylate synthase (277 aa).

R21 serves as a coordination point for dUMP. H51 serves as a coordination point for (6R)-5,10-methylene-5,6,7,8-tetrahydrofolate. 139–140 (RR) lines the dUMP pocket. Catalysis depends on C159, which acts as the Nucleophile. DUMP is bound by residues 179-182 (RSAD), N190, and 220-222 (HIY). D182 is a (6R)-5,10-methylene-5,6,7,8-tetrahydrofolate binding site. A276 is a (6R)-5,10-methylene-5,6,7,8-tetrahydrofolate binding site.

Belongs to the thymidylate synthase family. Bacterial-type ThyA subfamily. Homodimer.

Its subcellular location is the cytoplasm. The catalysed reaction is dUMP + (6R)-5,10-methylene-5,6,7,8-tetrahydrofolate = 7,8-dihydrofolate + dTMP. It participates in pyrimidine metabolism; dTTP biosynthesis. Catalyzes the reductive methylation of 2'-deoxyuridine-5'-monophosphate (dUMP) to 2'-deoxythymidine-5'-monophosphate (dTMP) while utilizing 5,10-methylenetetrahydrofolate (mTHF) as the methyl donor and reductant in the reaction, yielding dihydrofolate (DHF) as a by-product. This enzymatic reaction provides an intracellular de novo source of dTMP, an essential precursor for DNA biosynthesis. The polypeptide is Thymidylate synthase (Roseobacter denitrificans (strain ATCC 33942 / OCh 114) (Erythrobacter sp. (strain OCh 114))).